Reading from the N-terminus, the 149-residue chain is Deoxyuridine 5'-triphosphate nucleotidohydrolase (149 aa).

Residues 68–70 (RSG), Asn-81, 85–87 (LID), and Met-95 each bind substrate.

Belongs to the dUTPase family. Mg(2+) is required as a cofactor.

The enzyme catalyses dUTP + H2O = dUMP + diphosphate + H(+). It participates in pyrimidine metabolism; dUMP biosynthesis; dUMP from dCTP (dUTP route): step 2/2. Its function is as follows. This enzyme is involved in nucleotide metabolism: it produces dUMP, the immediate precursor of thymidine nucleotides and it decreases the intracellular concentration of dUTP so that uracil cannot be incorporated into DNA. The sequence is that of Deoxyuridine 5'-triphosphate nucleotidohydrolase from Methylibium petroleiphilum (strain ATCC BAA-1232 / LMG 22953 / PM1).